A 330-amino-acid chain; its full sequence is Type II methyltransferase M.MthTI (330 aa).

One can recognise an SAM-dependent MTase C5-type domain in the interval 3–328; that stretch reads MDIASFFSGA…KKIKKDLEGV (326 aa). Cys-73 is an active-site residue.

This sequence belongs to the class I-like SAM-binding methyltransferase superfamily. C5-methyltransferase family.

The catalysed reaction is a 2'-deoxycytidine in DNA + S-adenosyl-L-methionine = a 5-methyl-2'-deoxycytidine in DNA + S-adenosyl-L-homocysteine + H(+). A methylase that recognizes the double-stranded sequence 5'-GGCC-3', methylates C-3 on both strands, and protects the DNA from cleavage by the MthTI endonuclease. The chain is Type II methyltransferase M.MthTI (mthTIM) from Methanothermobacter thermautotrophicus (Methanobacterium thermoformicicum).